A 108-amino-acid chain; its full sequence is UPF0060 membrane protein RER_49640 (108 aa).

A run of 4 helical transmembrane segments spans residues 8–28 (LLFV…WQGI), 33–53 (GWIW…VATM), 62–82 (ILAA…VVMD), and 87–107 (DRFD…IMYA).

Belongs to the UPF0060 family.

It localises to the cell membrane. The chain is UPF0060 membrane protein RER_49640 from Rhodococcus erythropolis (strain PR4 / NBRC 100887).